Here is a 207-residue protein sequence, read N- to C-terminus: Probable molybdenum cofactor guanylyltransferase (207 aa).

GTP is bound by residues 9–11, K21, and D97; that span reads LAG. D97 contacts Mg(2+).

It belongs to the MobA family. Mg(2+) serves as cofactor.

The protein resides in the cytoplasm. The catalysed reaction is Mo-molybdopterin + GTP + H(+) = Mo-molybdopterin guanine dinucleotide + diphosphate. In terms of biological role, transfers a GMP moiety from GTP to Mo-molybdopterin (Mo-MPT) cofactor (Moco or molybdenum cofactor) to form Mo-molybdopterin guanine dinucleotide (Mo-MGD) cofactor. In Nostoc sp. (strain PCC 7120 / SAG 25.82 / UTEX 2576), this protein is Probable molybdenum cofactor guanylyltransferase.